The chain runs to 511 residues: Cytochrome P450 26B1 (511 aa).

Cys440 contacts heme.

The protein belongs to the cytochrome P450 family. The cofactor is heme.

The protein resides in the endoplasmic reticulum membrane. The protein localises to the microsome membrane. It catalyses the reaction all-trans-retinoate + reduced [NADPH--hemoprotein reductase] + O2 = all-trans-4-hydroxyretinoate + oxidized [NADPH--hemoprotein reductase] + H2O + H(+). It carries out the reaction all-trans-retinoate + reduced [NADPH--hemoprotein reductase] + O2 = all-trans-18-hydroxyretinoate + oxidized [NADPH--hemoprotein reductase] + H2O + H(+). Functionally, a cytochrome P450 monooxygenase involved in the metabolism of retinoates (RAs), the active metabolites of vitamin A, and critical signaling molecules in animals. RAs exist as at least four different isomers: all-trans-RA (atRA), 9-cis-RA, 13-cis-RA, and 9,13-dicis-RA, where atRA is considered to be the biologically active isomer, although 9-cis-RA and 13-cis-RA also have activity. Catalyzes the hydroxylation of atRA primarily at C-4 and C-18, thereby contributing to the regulation of atRA homeostasis and signaling. Hydroxylation of atRA limits its biological activity and initiates a degradative process leading to its eventual elimination. Involved in the convertion of atRA to all-trans-4-oxo-RA. Can oxidize all-trans-13,14-dihydroretinoate (DRA) to metabolites which could include all-trans-4-oxo-DRA, all-trans-4-hydroxy-DRA, all-trans-5,8-epoxy-DRA, and all-trans-18-hydroxy-DRA. The sequence is that of Cytochrome P450 26B1 (cyp26b1) from Xenopus tropicalis (Western clawed frog).